The following is a 495-amino-acid chain: Ribosomal protein uS12 methylthiotransferase RimO (495 aa).

An MTTase N-terminal domain is found at 5 to 121 (RTVALVTLGC…ISDRLQTILN (117 aa)). The [4Fe-4S] cluster site is built by cysteine 14, cysteine 50, and cysteine 84. Positions 145–183 (QSAGADVALPGHGAPEGLPEDLPEGLAPESGPRAPLRRR) are disordered. In terms of domain architecture, Radical SAM core spans 184–415 (LDGSPVASVK…RLAEELVAQR (232 aa)). Positions 198, 202, and 205 each coordinate [4Fe-4S] cluster. The region spanning 417–484 (EERVGETVHV…GVDLVAEPLP (68 aa)) is the TRAM domain.

It belongs to the methylthiotransferase family. RimO subfamily. Requires [4Fe-4S] cluster as cofactor.

The protein localises to the cytoplasm. The catalysed reaction is L-aspartate(89)-[ribosomal protein uS12]-hydrogen + (sulfur carrier)-SH + AH2 + 2 S-adenosyl-L-methionine = 3-methylsulfanyl-L-aspartate(89)-[ribosomal protein uS12]-hydrogen + (sulfur carrier)-H + 5'-deoxyadenosine + L-methionine + A + S-adenosyl-L-homocysteine + 2 H(+). Functionally, catalyzes the methylthiolation of an aspartic acid residue of ribosomal protein uS12. The chain is Ribosomal protein uS12 methylthiotransferase RimO from Streptomyces avermitilis (strain ATCC 31267 / DSM 46492 / JCM 5070 / NBRC 14893 / NCIMB 12804 / NRRL 8165 / MA-4680).